A 697-amino-acid polypeptide reads, in one-letter code: Phosphoribosylformylglycinamidine synthase subunit PurL (697 aa).

Residue histidine 34 is part of the active site. The ATP site is built by tyrosine 37 and lysine 76. Mg(2+) is bound at residue glutamate 78. Substrate is bound by residues 79–82 and arginine 101; that span reads SHNH. Histidine 80 acts as the Proton acceptor in catalysis. Residue aspartate 102 participates in Mg(2+) binding. Residue glutamine 224 coordinates substrate. Aspartate 250 is a binding site for Mg(2+). 294 to 296 contributes to the substrate binding site; that stretch reads ETQ. 2 residues coordinate ATP: aspartate 472 and glycine 509. Residue serine 512 participates in substrate binding.

This sequence belongs to the FGAMS family. In terms of assembly, monomer. Part of the FGAM synthase complex composed of 1 PurL, 1 PurQ and 2 PurS subunits.

It localises to the cytoplasm. The enzyme catalyses N(2)-formyl-N(1)-(5-phospho-beta-D-ribosyl)glycinamide + L-glutamine + ATP + H2O = 2-formamido-N(1)-(5-O-phospho-beta-D-ribosyl)acetamidine + L-glutamate + ADP + phosphate + H(+). Its pathway is purine metabolism; IMP biosynthesis via de novo pathway; 5-amino-1-(5-phospho-D-ribosyl)imidazole from N(2)-formyl-N(1)-(5-phospho-D-ribosyl)glycinamide: step 1/2. Its function is as follows. Part of the phosphoribosylformylglycinamidine synthase complex involved in the purines biosynthetic pathway. Catalyzes the ATP-dependent conversion of formylglycinamide ribonucleotide (FGAR) and glutamine to yield formylglycinamidine ribonucleotide (FGAM) and glutamate. The FGAM synthase complex is composed of three subunits. PurQ produces an ammonia molecule by converting glutamine to glutamate. PurL transfers the ammonia molecule to FGAR to form FGAM in an ATP-dependent manner. PurS interacts with PurQ and PurL and is thought to assist in the transfer of the ammonia molecule from PurQ to PurL. The protein is Phosphoribosylformylglycinamidine synthase subunit PurL of Pyrobaculum aerophilum (strain ATCC 51768 / DSM 7523 / JCM 9630 / CIP 104966 / NBRC 100827 / IM2).